Consider the following 540-residue polypeptide: Flavin-dependent halogenase ptaM (540 aa).

The N-terminal stretch at 1-21 is a signal peptide; sequence MSVPAQTSVLIVGGGPAGSYA. The FAD site is built by G14, A17, and E47. Residues N159, N192, N204, and N243 are each glycosylated (N-linked (GlcNAc...) asparagine). Chloride contacts are provided by S330 and G331. Residues N480, N491, and N523 are each glycosylated (N-linked (GlcNAc...) asparagine).

Belongs to the flavin-dependent halogenase family.

It functions in the pathway secondary metabolite biosynthesis. Flavin-dependent halogenase; part of the gene cluster that mediates the biosynthesis of pestheic acid, a diphenyl ether which is a biosynthetic precursor of the unique chloropupukeananes. The biosynthesis initiates from condensation of acetate and malonate units catalyzed by the non-reducing PKS ptaA. As the ptaA protein is TE/CLC domain-deficient, hydrolysis and Claisen cyclization of the polyketide could be catalyzed by ptaB containing a beta-lactamase domain. The ptaB protein might hydrolyze the thioester bond between the ACP of ptaA and the intermediate to release atrochrysone carboxylic acid, which is spontaneously dehydrated to form endocrocin anthrone. Endocrocin anthrone is then converted to endocrocin, catalyzed by the anthrone oxygenase ptaC. Spontaneous decarboxylation of endocrocin occurs to generate emodin. An O-methyltransferase (ptaH or ptaI) could methylate emodin to form physcion. PtaJ could then catalyze the oxidative cleavage of physcion, and rotation of the intermediate could then afford desmethylisosulochrin. PtaF, a putative NADH-dependent oxidoreductase, might also participate in the oxidative cleavage step. Desmethylisosulochrin is then transformed by another O-methyltransferase (ptaH or ptaI) to form isosulochrin. Chlorination of isosulochrin by ptaM in the cyclohexadienone B ring then produces chloroisosulochrin. PtaE is responsible for the oxidative coupling reactions of both benzophenones isosulochrin and chloroisosulochrin to RES-1214-1 and pestheic acid respectively, regardless of chlorination. The polypeptide is Flavin-dependent halogenase ptaM (Pestalotiopsis fici (strain W106-1 / CGMCC3.15140)).